Consider the following 338-residue polypeptide: Aspartate-semialdehyde dehydrogenase (338 aa).

NADP(+) contacts are provided by residues 13-16 (TGAV) and 41-42 (RS). Arg-101 serves as a coordination point for phosphate. Residue Cys-130 is the Acyl-thioester intermediate of the active site. Position 157 (Gln-157) interacts with substrate. 160–161 (SG) is a binding site for NADP(+). Lys-214 contributes to the phosphate binding site. Arg-236 contacts substrate. His-243 functions as the Proton acceptor in the catalytic mechanism. An NADP(+)-binding site is contributed by Gln-316.

The protein belongs to the aspartate-semialdehyde dehydrogenase family. In terms of assembly, homodimer.

The enzyme catalyses L-aspartate 4-semialdehyde + phosphate + NADP(+) = 4-phospho-L-aspartate + NADPH + H(+). It participates in amino-acid biosynthesis; L-lysine biosynthesis via DAP pathway; (S)-tetrahydrodipicolinate from L-aspartate: step 2/4. It functions in the pathway amino-acid biosynthesis; L-methionine biosynthesis via de novo pathway; L-homoserine from L-aspartate: step 2/3. The protein operates within amino-acid biosynthesis; L-threonine biosynthesis; L-threonine from L-aspartate: step 2/5. Functionally, catalyzes the NADPH-dependent formation of L-aspartate-semialdehyde (L-ASA) by the reductive dephosphorylation of L-aspartyl-4-phosphate. The chain is Aspartate-semialdehyde dehydrogenase (asd) from Synechocystis sp. (strain ATCC 27184 / PCC 6803 / Kazusa).